A 509-amino-acid polypeptide reads, in one-letter code: Ethanolamine-phosphate phospho-lyase (509 aa).

Lys-279 carries the N6-(pyridoxal phosphate)lysine modification. The segment covering 451-474 (EKTSAKRKVHNENSGDTNAKEKET) has biased composition (basic and acidic residues). The segment at 451–509 (EKTSAKRKVHNENSGDTNAKEKETCSSNSQERNPNDHAYRQSNGLHPESPTFTRKRIRT) is disordered.

Belongs to the class-III pyridoxal-phosphate-dependent aminotransferase family. Homotetramer. It depends on pyridoxal 5'-phosphate as a cofactor.

The protein resides in the mitochondrion. The catalysed reaction is phosphoethanolamine + H2O = acetaldehyde + NH4(+) + phosphate. Catalyzes the pyridoxal-phosphate-dependent breakdown of phosphoethanolamine, converting it to ammonia, inorganic phosphate and acetaldehyde. The sequence is that of Ethanolamine-phosphate phospho-lyase (etnppl) from Xenopus laevis (African clawed frog).